A 53-amino-acid chain; its full sequence is Chlorophyll a-b binding protein 1, chloroplastic (53 aa).

Residue F18 coordinates chlorophyll b. Chlorophyll a contacts are provided by E48 and H51. R53 is a chlorophyll b binding site.

Belongs to the light-harvesting chlorophyll a/b-binding (LHC) protein family. As to quaternary structure, the LHC complex consists of chlorophyll a-b binding proteins. Binds at least 14 chlorophylls (8 Chl-a and 6 Chl-b) and carotenoids such as lutein and neoxanthin. serves as cofactor. Photoregulated by reversible phosphorylation of its threonine residues.

The protein localises to the plastid. It localises to the chloroplast thylakoid membrane. The light-harvesting complex (LHC) functions as a light receptor, it captures and delivers excitation energy to photosystems with which it is closely associated. The sequence is that of Chlorophyll a-b binding protein 1, chloroplastic from Populus euphratica (Euphrates poplar).